Consider the following 111-residue polypeptide: Ig kappa chain V-III region PC 7175 (111 aa).

The interval 1 to 23 (DIVLTQSPASLAVSLGQRATISC) is framework-1. C23 and C92 are disulfide-bonded. Positions 24–38 (RASKSVSTSGYSYMH) are complementarity-determining-1. A framework-2 region spans residues 39-53 (WYQQKPGQPPKLLIY). The interval 54-60 (LASNLES) is complementarity-determining-2. The tract at residues 61 to 92 (GVPARFSGSGSGTDFTLNIHPVEEEDAATYYC) is framework-3. The segment at 93–101 (QHSRELPLT) is complementarity-determining-3. Residues 102–111 (FGAGTKLELK) are framework-4.

This chain is Ig kappa chain V-III region PC 7175, found in Mus musculus (Mouse).